Consider the following 243-residue polypeptide: Carboxy-S-adenosyl-L-methionine synthase (243 aa).

Residues Y39, 64-66, N132, and R199 each bind S-adenosyl-L-methionine; that span reads GCS.

The protein belongs to the class I-like SAM-binding methyltransferase superfamily. Cx-SAM synthase family. Homodimer.

It catalyses the reaction prephenate + S-adenosyl-L-methionine = carboxy-S-adenosyl-L-methionine + 3-phenylpyruvate + H2O. Its function is as follows. Catalyzes the conversion of S-adenosyl-L-methionine (SAM) to carboxy-S-adenosyl-L-methionine (Cx-SAM). The chain is Carboxy-S-adenosyl-L-methionine synthase from Alteromonas mediterranea (strain DSM 17117 / CIP 110805 / LMG 28347 / Deep ecotype).